The primary structure comprises 175 residues: MVFLPDNILILGHGGFGFNTNVFETNIINLAAVVGIVVSFVGKNLSSLLEDRKNTIVKNLEEANQRAIEAEQKLTAARTQLETAKKKAQEIREEGVLRATQEINNVVSQHELRLARLQEFKQETLAFYQQKAFKQAYLYVINKIMTRVRERLNKGLDSTYHVVVNNFYVSRFTQF.

Residues 22–42 (VFETNIINLAAVVGIVVSFVG) traverse the membrane as a helical segment.

Belongs to the ATPase B chain family. As to quaternary structure, F-type ATPases have 2 components, F(1) - the catalytic core - and F(0) - the membrane proton channel. F(1) has five subunits: alpha(3), beta(3), gamma(1), delta(1), epsilon(1). F(0) has four main subunits: a(1), b(1), b'(1) and c(10-14). The alpha and beta chains form an alternating ring which encloses part of the gamma chain. F(1) is attached to F(0) by a central stalk formed by the gamma and epsilon chains, while a peripheral stalk is formed by the delta, b and b' chains.

The protein localises to the plastid. Its subcellular location is the chloroplast thylakoid membrane. Its function is as follows. F(1)F(0) ATP synthase produces ATP from ADP in the presence of a proton or sodium gradient. F-type ATPases consist of two structural domains, F(1) containing the extramembraneous catalytic core and F(0) containing the membrane proton channel, linked together by a central stalk and a peripheral stalk. During catalysis, ATP synthesis in the catalytic domain of F(1) is coupled via a rotary mechanism of the central stalk subunits to proton translocation. In terms of biological role, component of the F(0) channel, it forms part of the peripheral stalk, linking F(1) to F(0). In Chlamydomonas reinhardtii (Chlamydomonas smithii), this protein is ATP synthase subunit b, chloroplastic.